A 905-amino-acid polypeptide reads, in one-letter code: DNA mismatch repair protein MutS (905 aa).

The segment at 388–410 (LERPANPEGTYPTDAETSGDTLP) is disordered. 638-645 (GPNMAGKS) contributes to the ATP binding site. Positions 826 to 847 (RDAARGTNSAPSRQTLPGLDLP) are disordered. The segment covering 831–840 (GTNSAPSRQT) has biased composition (polar residues).

The protein belongs to the DNA mismatch repair MutS family.

In terms of biological role, this protein is involved in the repair of mismatches in DNA. It is possible that it carries out the mismatch recognition step. This protein has a weak ATPase activity. The polypeptide is DNA mismatch repair protein MutS (Nitratidesulfovibrio vulgaris (strain DP4) (Desulfovibrio vulgaris)).